A 389-amino-acid polypeptide reads, in one-letter code: MEFPLAQICPQGSHEAPIPTFSTFQITDMTRRSCQNLGYTAASPQAPEAASNTGNAERAEEVPGEGSLFLQAETRAWFQKTQAHWLLQHGAAPAWFHGFITRREAERLLEPKPQGCYLVRFSESAVTFVLTYRSRTCCRHFLLAQLRDGRHVVLGEDSAHARLQDLLLHYTAHPLSPYGETLTEPLARQTPEPAGLSLRTEESNFGSKSQDPNPQYSPIIKQGQAPVPMQKEGAGEKEPSQLLRPKPPIPAKPQLPPEVYTIPVPRHRPAPRPKPSNPIYNEPDEPIAFYAMGRGSPGEAPSNIYVEVEDEGLPATLGHPVLRKSWSRPVPGGQNTGGSQLHSENSVIGQGPPLPHQPPPAWRHTLPHNLSRQVLQDRGQAWLPLGPPQ.

The disordered stretch occupies residues 41–63; that stretch reads AASPQAPEAASNTGNAERAEEVP. One can recognise an SH2 domain in the interval 95-186; sequence WFHGFITRRE…PYGETLTEPL (92 aa). The tract at residues 190–295 is disordered; sequence TPEPAGLSLR…PIAFYAMGRG (106 aa). Over residues 203–216 the composition is skewed to polar residues; sequence SNFGSKSQDPNPQY. Serine 217 is modified (phosphoserine). Short sequence motifs (SH3-binding) lie at residues 244-250 and 272-278; these read RPKPPIP and RPKPSNP. Pro residues predominate over residues 245–256; sequence PKPPIPAKPQLP. Serine 296 is modified (phosphoserine). The segment at 324-389 is disordered; that stretch reads KSWSRPVPGG…QAWLPLGPPQ (66 aa). The span at 337 to 348 shows a compositional bias: polar residues; sequence GGSQLHSENSVI. Pro residues predominate over residues 352–361; it reads PPLPHQPPPA.

In terms of assembly, interacts with KDR. Interacts with TXK and ITK. In terms of processing, phosphorylated on tyrosine residues. As to expression, expression limited to tissues of the immune system and, in particular, activated T-cells. Expressed in peripheral blood leukocytes, thymus and spleen. Much lower expression or undetectable, in brain, placenta, skeletal muscle, prostate, testis, ovary, small intestine, and colon. Expressed at low levels in unstimulated T-cells, but not expressed in normal resting or activated B-cells. According to PubMed:10692392, expression is not restricted to activated T-cells, but strongly expressed in blood cell lineages, the endothelium and other cell and tissue types, such as heart, lung, and liver.

The protein resides in the cytoplasm. Its function is as follows. Could be a T-cell-specific adapter protein involved in the control of T-cell activation. May play a role in the CD4-p56-LCK-dependent signal transduction pathway. Could also play an important role in normal and pathological angiogenesis. Could be an adapter protein that facilitates and regulates interaction of KDR with effector proteins important to endothelial cell survival and proliferation. The polypeptide is SH2 domain-containing protein 2A (SH2D2A) (Homo sapiens (Human)).